The chain runs to 414 residues: Enolase (414 aa).

Glutamine 162 provides a ligand contact to (2R)-2-phosphoglycerate. Catalysis depends on glutamate 204, which acts as the Proton donor. Mg(2+) is bound by residues aspartate 239, glutamate 280, and aspartate 307. Residues lysine 332, arginine 361, serine 362, and lysine 383 each coordinate (2R)-2-phosphoglycerate. Lysine 332 (proton acceptor) is an active-site residue.

It belongs to the enolase family. Mg(2+) is required as a cofactor.

It localises to the cytoplasm. It is found in the secreted. The protein resides in the cell surface. The catalysed reaction is (2R)-2-phosphoglycerate = phosphoenolpyruvate + H2O. Its pathway is carbohydrate degradation; glycolysis; pyruvate from D-glyceraldehyde 3-phosphate: step 4/5. Catalyzes the reversible conversion of 2-phosphoglycerate (2-PG) into phosphoenolpyruvate (PEP). It is essential for the degradation of carbohydrates via glycolysis. The protein is Enolase of Campylobacter jejuni subsp. jejuni serotype O:2 (strain ATCC 700819 / NCTC 11168).